The primary structure comprises 306 residues: MVLLQTIAHAKINIGLMIPYKREDGLHEIRSVFVPIDFGDPMEIQIKSLPKGIVSRFVFHSTNHLQGYRHSLFEAVSERGDLSQNILTKTFHKLKPYFQEALEIKVQIQKHLPPEGGIGGGSSNAGVLLQHLFPYTNLSRGEQIQFAKSIGADVPFFLQSSACFVTGIGEVMEPIRLAKGFGILAIPPFGLSTGSMYASLQKSLQKPYGSEVWKSLTEDLIRSLHVGDWVYLQNRLENEFEKIAFQTQPLLKELKLGFFESGAIFASLSGSGSCLYGIYPTEEKRNEALPNVSLRFPKMEFRTFSF.

Residue Lys-11 is part of the active site. Pro-113–Ser-123 provides a ligand contact to ATP. Asp-153 is a catalytic residue.

It belongs to the GHMP kinase family. IspE subfamily.

The catalysed reaction is 4-CDP-2-C-methyl-D-erythritol + ATP = 4-CDP-2-C-methyl-D-erythritol 2-phosphate + ADP + H(+). Its pathway is isoprenoid biosynthesis; isopentenyl diphosphate biosynthesis via DXP pathway; isopentenyl diphosphate from 1-deoxy-D-xylulose 5-phosphate: step 3/6. In terms of biological role, catalyzes the phosphorylation of the position 2 hydroxy group of 4-diphosphocytidyl-2C-methyl-D-erythritol. The polypeptide is 4-diphosphocytidyl-2-C-methyl-D-erythritol kinase (Leptospira biflexa serovar Patoc (strain Patoc 1 / ATCC 23582 / Paris)).